The primary structure comprises 412 residues: Non-specific lipid-transfer protein-like 2 (412 aa).

The short motif at 410-412 (SKI) is the Microbody targeting signal element.

It belongs to the thiolase-like superfamily. Thiolase family. As to expression, expressed in intestine, hypodermis and body-wall muscle.

Its subcellular location is the peroxisome. The catalysed reaction is choloyl-CoA + propanoyl-CoA = 3alpha,7alpha,12alpha-trihydroxy-24-oxo-5beta-cholestan-26-oyl-CoA + CoA. With respect to regulation, inhibited by acetyl-CoA. Its function is as follows. Catalyzes the thiolytic cleavage of 3-ketoacyl-CoA with 8-16 carbon residues in the acyl group using a ping-pong mechanism whereby binding to 3-ketooctanoyl-CoA results in the release of acetyl-CoA and the subsequent addition of CoA produces 3-ketohexanohyl-CoA. Involved in the biosynthesis of the dauer pheromone by providing short chains of fatty acid that are attached to the ascarylose sugars of the pheromone. In Caenorhabditis elegans, this protein is Non-specific lipid-transfer protein-like 2.